The primary structure comprises 43 residues: Large ribosomal subunit protein bL32 (43 aa).

It belongs to the bacterial ribosomal protein bL32 family.

This chain is Large ribosomal subunit protein bL32 (rpmF), found in Carsonella ruddii (strain PV).